We begin with the raw amino-acid sequence, 180 residues long: Translation initiation factor IF-3 (180 aa).

It belongs to the IF-3 family. Monomer.

Its subcellular location is the cytoplasm. In terms of biological role, IF-3 binds to the 30S ribosomal subunit and shifts the equilibrium between 70S ribosomes and their 50S and 30S subunits in favor of the free subunits, thus enhancing the availability of 30S subunits on which protein synthesis initiation begins. This Escherichia coli (strain K12 / MC4100 / BW2952) protein is Translation initiation factor IF-3.